A 356-amino-acid chain; its full sequence is tRNA-specific 2-thiouridylase MnmA 1 (356 aa).

Residues 8 to 15 (GMSGGVDS) and Met34 contribute to the ATP site. Cys103 acts as the Nucleophile in catalysis. Cys103 and Cys199 are disulfide-bonded. An ATP-binding site is contributed by Gly127. Residues 149-151 (KDQ) are interaction with tRNA. The active-site Cysteine persulfide intermediate is Cys199. Residues 305-306 (RY) are interaction with tRNA.

This sequence belongs to the MnmA/TRMU family.

It localises to the cytoplasm. The catalysed reaction is S-sulfanyl-L-cysteinyl-[protein] + uridine(34) in tRNA + AH2 + ATP = 2-thiouridine(34) in tRNA + L-cysteinyl-[protein] + A + AMP + diphosphate + H(+). In terms of biological role, catalyzes the 2-thiolation of uridine at the wobble position (U34) of tRNA, leading to the formation of s(2)U34. This is tRNA-specific 2-thiouridylase MnmA 1 from Clostridium botulinum (strain ATCC 19397 / Type A).